The sequence spans 759 residues: uncharacterized protein (759 aa).

Residues 352 to 556 form the MCM domain; that stretch reads VIQKLSDYAF…KDEDIADFSI (205 aa). 397–404 provides a ligand contact to ATP; sequence SDPGVGKS.

It belongs to the MCM family.

This is an uncharacterized protein from Methanocaldococcus jannaschii (strain ATCC 43067 / DSM 2661 / JAL-1 / JCM 10045 / NBRC 100440) (Methanococcus jannaschii).